We begin with the raw amino-acid sequence, 705 residues long: MTKLGFLRLSYEKQDTLLKLLILSMAAVLSFSTRLFAVLRFESVIHEFDPYFNYRTTRFLAEEGFYKFHNWFDDRAWYPLGRIIGGTIYPGLMITSAAIYHVLHFFHITIDIRNVCVFLAPLFSSFTTIVTYHLTKELKDAGAGLLAAAMIAVVPGYISRSVAGSYDNEGIAIFCMLLTYYMWIKAVKTGSIYWAAKCALAYFYMVSSWGGYVFLINLIPLHVLVLMLTGRFSHRIYVAYCTVYCLGTILSMQISFVGFQPVLSSEHMAAFGVFGLCQIHAFVDYLRSKLNPQQFEVLFRSVISLVGFVLLTVGALLMLTGKISPWTGRFYSLLDPSYAKNNIPIIASVSEHQPTTWSSYYFDLQLLVFMFPVGLYYCFSNLSDARIFIIMYGVTSMYFSAVMVRLMLVLAPVMCILSGIGVSQVLSTYMKNLDISRPDKKSKKQQDSTYPIKNEVASGMILVMAFFLITYTFHSTWVTSEAYSSPSIVLSARGGDGSRIIFDDFREAYYWLRHNTPEDAKVMSWWDYGYQITAMANRTILVDNNTWNNTHISRVGQAMASTEEKAYEIMRELDVSYVLVIFGGLTGYSSDDINKFLWMVRIGGSTDTGKHIKEHDYYTPTGEFRVDREGSPVLLNCLMYKMCYYRFGQVYTEAKRPPGFDRVRNAEIGNKDFELDVLEEAYTTEHWLVRIYKVKDLDNRGLSRT.

Topologically, residues 1-15 are cytoplasmic; that stretch reads MTKLGFLRLSYEKQD. The chain crosses the membrane as a helical span at residues 16-34; that stretch reads TLLKLLILSMAAVLSFSTR. The Lumenal portion of the chain corresponds to 35-111; that stretch reads LFAVLRFESV…VLHFFHITID (77 aa). A DXD motif 1 motif is present at residues 47–49; the sequence is EFD. Aspartate 49 serves as a coordination point for Mn(2+). A helical transmembrane segment spans residues 112–141; sequence IRNVCVFLAPLFSSFTTIVTYHLTKELKDA. Position 142 (glycine 142) is a topological domain, cytoplasmic. Residues 143-158 form a helical membrane-spanning segment; sequence AGLLAAAMIAVVPGYI. At 159–170 the chain is on the lumenal side; that stretch reads SRSVAGSYDNEG. The Mn(2+) site is built by aspartate 167 and glutamate 169. Residues 167 to 169 carry the DXD motif 2 motif; it reads DNE. A helical transmembrane segment spans residues 171–188; it reads IAIFCMLLTYYMWIKAVK. At 189 to 191 the chain is on the cytoplasmic side; the sequence is TGS. Residues 192 to 207 form a helical membrane-spanning segment; that stretch reads IYWAAKCALAYFYMVS. The Lumenal portion of the chain corresponds to 208-210; sequence SWG. A helical transmembrane segment spans residues 211–229; sequence GYVFLINLIPLHVLVLMLT. Topologically, residues 230–234 are cytoplasmic; that stretch reads GRFSH. A helical membrane pass occupies residues 235-253; sequence RIYVAYCTVYCLGTILSMQ. The Lumenal portion of the chain corresponds to 254–265; sequence ISFVGFQPVLSS. Residues 266 to 283 traverse the membrane as a helical segment; it reads EHMAAFGVFGLCQIHAFV. Topologically, residues 284-298 are cytoplasmic; sequence DYLRSKLNPQQFEVL. The helical transmembrane segment at 299-317 threads the bilayer; the sequence is FRSVISLVGFVLLTVGALL. The Lumenal segment spans residues 318 to 356; the sequence is MLTGKISPWTGRFYSLLDPSYAKNNIPIIASVSEHQPTT. Positions 348-351 match the SVSE motif motif; sequence SVSE. A helical transmembrane segment spans residues 357-379; it reads WSSYYFDLQLLVFMFPVGLYYCF. Over 380-385 the chain is Cytoplasmic; that stretch reads SNLSDA. Residues 386-402 traverse the membrane as a helical segment; that stretch reads RIFIIMYGVTSMYFSAV. The Lumenal segment spans residues 403–406; the sequence is MVRL. A dolichyl diphosphooligosaccharide-binding site is contributed by arginine 405. A helical membrane pass occupies residues 407–428; sequence MLVLAPVMCILSGIGVSQVLST. Topologically, residues 429–453 are cytoplasmic; that stretch reads YMKNLDISRPDKKSKKQQDSTYPIK. The helical transmembrane segment at 454–473 threads the bilayer; that stretch reads NEVASGMILVMAFFLITYTF. At 474 to 705 the chain is on the lumenal side; the sequence is HSTWVTSEAY…DLDNRGLSRT (232 aa). Residues 525 to 527 are interacts with target acceptor peptide in protein substrate; that stretch reads WWD. The WWDYG motif motif lies at 525 to 529; that stretch reads WWDYG. Tyrosine 530 is a binding site for dolichyl diphosphooligosaccharide. N-linked (GlcNAc...) asparagine glycans are attached at residues asparagine 537 and asparagine 544. Asparagine 548 is a glycosylation site (N-linked (GlcNAc...) (high mannose) asparagine). Residues 592-599 carry the DK motif motif; it reads DINKFLWM.

This sequence belongs to the STT3 family. Component of the oligosaccharyltransferase (OST) complex. There are 2 OST complexes, OST-A and OST-B, which contain STT3A or STT3B as catalytic subunit, respectively. OST-A and OST-B contain common core subunits RPN1, RPN2, OST48, OST4, DAD1 and TMEM258, and OST-A contains DC2/OSTC and KRTCAP2/KCP2 specific accessory subunits. OST-A complex assembly occurs through the formation of 3 subcomplexes. Subcomplex 1 contains RPN1 and TMEM258, subcomplex 2 contains the OST-A-specific subunits STT3A, DC2/OSTC, and KCP2 as well as the core subunit OST4, and subcomplex 3 contains RPN2, DAD1, and OST48. The OST-A complex can form stable complexes with the Sec61 complex or with both the Sec61 and TRAP complexes. It depends on Mg(2+) as a cofactor. Mn(2+) serves as cofactor.

It is found in the endoplasmic reticulum membrane. The catalysed reaction is a di-trans,poly-cis-dolichyl diphosphooligosaccharide + L-asparaginyl-[protein] = N(4)-(oligosaccharide-(1-&gt;4)-N-acetyl-beta-D-glucosaminyl-(1-&gt;4)-N-acetyl-beta-D-glucosaminyl)-L-asparaginyl-[protein] + a di-trans,poly-cis-dolichyl diphosphate + H(+). It functions in the pathway protein modification; protein glycosylation. Functionally, catalytic subunit of the oligosaccharyl transferase (OST) complex that catalyzes the initial transfer of a defined glycan (Glc(3)Man(9)GlcNAc(2) in eukaryotes) from the lipid carrier dolichol-pyrophosphate to an asparagine residue within an Asn-X-Ser/Thr consensus motif in nascent polypeptide chains, the first step in protein N-glycosylation. N-glycosylation occurs cotranslationally and the complex associates with the Sec61 complex at the channel-forming translocon complex that mediates protein translocation across the endoplasmic reticulum (ER). All subunits are required for a maximal enzyme activity. This subunit contains the active site and the acceptor peptide and donor lipid-linked oligosaccharide (LLO) binding pockets. STT3A is present in the majority of OST complexes and mediates cotranslational N-glycosylation of most sites on target proteins, while STT3B-containing complexes are required for efficient post-translational glycosylation and mediate glycosylation of sites that have been skipped by STT3A. STT3A-containing OST-A complex is also required to prevent hyperglycosylation of some target proteins by preventing glycosylation of facultative sites before folding of target proteins is completed. The polypeptide is Dolichyl-diphosphooligosaccharide--protein glycosyltransferase subunit STT3A (Canis lupus familiaris (Dog)).